Consider the following 217-residue polypeptide: Probable cytidylate kinase (217 aa).

ATP is bound at residue 9 to 17 (GPAGSGKST).

Belongs to the cytidylate kinase family. Type 1 subfamily.

The enzyme catalyses CMP + ATP = CDP + ADP. It carries out the reaction dCMP + ATP = dCDP + ADP. The protein is Probable cytidylate kinase of Vairimorpha ceranae (strain BRL01) (Microsporidian parasite).